The sequence spans 455 residues: Tubulin delta chain (455 aa).

Ala-143 to Gly-149 is a GTP binding site.

This sequence belongs to the tubulin family. Found in a complex with TEDC1, TEDC2, TUBE1 and TUBD1. Highly expressed in testis.

It localises to the cell projection. The protein resides in the cilium. Its subcellular location is the cytoplasm. It is found in the cytoskeleton. The protein localises to the microtubule organizing center. It localises to the centrosome. The protein resides in the centriole. Its subcellular location is the nucleus. Its function is as follows. Acts as a positive regulator of hedgehog signaling and regulates ciliary function. The protein is Tubulin delta chain (Tubd1) of Mus musculus (Mouse).